A 453-amino-acid chain; its full sequence is Ribosomal protein uS12 methylthiotransferase RimO (453 aa).

The MTTase N-terminal domain maps to 5-120 (PKVGFVSLGC…VMQAVHSHLP (116 aa)). Residues Cys14, Cys50, Cys79, Cys151, Cys155, and Cys158 each coordinate [4Fe-4S] cluster. The region spanning 137–382 (LTPRHYAYLK…MEVAEEVSAQ (246 aa)) is the Radical SAM core domain. The region spanning 385-453 (QRKVGKTLKV…ADGHDLWGEV (69 aa)) is the TRAM domain.

It belongs to the methylthiotransferase family. RimO subfamily. The cofactor is [4Fe-4S] cluster.

The protein resides in the cytoplasm. The catalysed reaction is L-aspartate(89)-[ribosomal protein uS12]-hydrogen + (sulfur carrier)-SH + AH2 + 2 S-adenosyl-L-methionine = 3-methylsulfanyl-L-aspartate(89)-[ribosomal protein uS12]-hydrogen + (sulfur carrier)-H + 5'-deoxyadenosine + L-methionine + A + S-adenosyl-L-homocysteine + 2 H(+). Catalyzes the methylthiolation of an aspartic acid residue of ribosomal protein uS12. The polypeptide is Ribosomal protein uS12 methylthiotransferase RimO (Burkholderia ambifaria (strain ATCC BAA-244 / DSM 16087 / CCUG 44356 / LMG 19182 / AMMD) (Burkholderia cepacia (strain AMMD))).